A 690-amino-acid chain; its full sequence is Exonuclease GOR (690 aa).

Disordered regions lie at residues 136-162 (TRVASSSQRSSGSKVGRQPGKTRNRSG) and 567-690 (QPRH…SLHH). Residues 585–595 (APSTTAISPES) are compositionally biased toward polar residues. Basic and acidic residues predominate over residues 605–614 (KETGAVDGRR). Positions 612–626 (GRRGQKAKSNPNRPL) are GOR14-1 epitope. Over residues 631 to 646 (NPCRGPSGLSPSLCPS) the composition is skewed to low complexity. A compositionally biased stretch (pro residues) spans 661–682 (PPLPVPRVPAAPPRACPHPSAH).

This sequence belongs to the REXO1/REXO3 family.

The protein resides in the cytoplasm. The protein localises to the nucleus. The polypeptide is Exonuclease GOR (REXO1L1) (Pan troglodytes (Chimpanzee)).